A 327-amino-acid chain; its full sequence is Phenylalanine--tRNA ligase alpha subunit (327 aa).

Mg(2+) is bound at residue Glu252.

The protein belongs to the class-II aminoacyl-tRNA synthetase family. Phe-tRNA synthetase alpha subunit type 1 subfamily. Tetramer of two alpha and two beta subunits. The cofactor is Mg(2+).

The protein localises to the cytoplasm. The catalysed reaction is tRNA(Phe) + L-phenylalanine + ATP = L-phenylalanyl-tRNA(Phe) + AMP + diphosphate + H(+). In Salmonella newport (strain SL254), this protein is Phenylalanine--tRNA ligase alpha subunit.